Here is a 466-residue protein sequence, read N- to C-terminus: Signal recognition particle 54 kDa protein (466 aa).

GTP-binding positions include 104-111 (GLQGSGKT), 184-188 (DTAGR), and 242-245 (TKLD). The tract at residues 444–466 (MQQGGGGGGGGGGGLGGMGPFGD) is disordered. Residues 446–466 (QGGGGGGGGGGGLGGMGPFGD) are compositionally biased toward gly residues.

Belongs to the GTP-binding SRP family. SRP54 subfamily. Part of the signal recognition particle protein translocation system, which is composed of SRP and FtsY. Archaeal SRP consists of a 7S RNA molecule of 300 nucleotides and two protein subunits: SRP54 and SRP19.

It is found in the cytoplasm. The enzyme catalyses GTP + H2O = GDP + phosphate + H(+). Functionally, involved in targeting and insertion of nascent membrane proteins into the cytoplasmic membrane. Binds to the hydrophobic signal sequence of the ribosome-nascent chain (RNC) as it emerges from the ribosomes. The SRP-RNC complex is then targeted to the cytoplasmic membrane where it interacts with the SRP receptor FtsY. The chain is Signal recognition particle 54 kDa protein from Natronomonas pharaonis (strain ATCC 35678 / DSM 2160 / CIP 103997 / JCM 8858 / NBRC 14720 / NCIMB 2260 / Gabara) (Halobacterium pharaonis).